The sequence spans 1966 residues: Probable serine/threonine-protein kinase vps15 (1966 aa).

The Protein kinase domain maps to 21 to 303 (IVFKKSLGNA…QYFSFAHQFI (283 aa)). Residues 27–35 (LGNARFLKT) and K49 contribute to the ATP site. D144 acts as the Proton acceptor in catalysis. The tract at residues 362–407 (PILISNNNNNNNNNNNNNNNNNNNNNNNNNNNNNNNNNQTTTTTTN) is disordered. Residues 367-407 (NNNNNNNNNNNNNNNNNNNNNNNNNNNNNNNNNQTTTTTTN) show a composition bias toward low complexity. HEAT repeat units follow at residues 558–596 (CRLQ…MVQT), 604–642 (IFGQ…TAKR), 717–754 (KTNE…VVGA), and 756–793 (SLES…LGLL). Disordered stretches follow at residues 916 to 937 (SFNS…TGGS), 1036 to 1062 (SSSN…TNST), 1106 to 1130 (GGIT…TGLN), and 1190 to 1263 (TSLS…NNMN). 2 stretches are compositionally biased toward low complexity: residues 1106–1119 (GGIT…TTLG) and 1192–1263 (LSNS…NNMN). 4 WD repeats span residues 1460-1499 (EHKA…KSVT), 1508-1547 (QQEG…KQKN), 1564-1605 (TTRG…DAFN), and 1610-1649 (ASLG…PLYS). The disordered stretch occupies residues 1699-1743 (RSYEQPPQQQPQQPQPPQQQQQQQSQMNRSINMTSSTTTTTTSSY). 2 stretches are compositionally biased toward low complexity: residues 1703 to 1722 (QPPQ…QQQQ) and 1732 to 1742 (TSSTTTTTTSS). WD repeat units follow at residues 1790–1829 (KPTP…QSYY) and 1935–1966 (HHQE…KVWK).

The protein belongs to the protein kinase superfamily. Ser/Thr protein kinase family.

The catalysed reaction is L-seryl-[protein] + ATP = O-phospho-L-seryl-[protein] + ADP + H(+). It catalyses the reaction L-threonyl-[protein] + ATP = O-phospho-L-threonyl-[protein] + ADP + H(+). This Dictyostelium discoideum (Social amoeba) protein is Probable serine/threonine-protein kinase vps15 (vps15).